Here is a 235-residue protein sequence, read N- to C-terminus: MPKLSKRLASLVTKIEDRAYQPLEAIQLVKENATAKFDETMEAHVRLGIDPKYTDQQLRTTVALPQGTGQTVRIAVITRGEKVAEAKAAGAELSGDEDLVEAISKGEMNFDLLIATPDMMPKVAKLGRVLGPRGLMPNPKAGTVTTDLASAIQEFKAGKLEFRADRTGIVHVRFGKASFTAEALLENLKTLQETIDRNKPSGAKGRYWKSLYVTSTMGPSVEVDIALLQDIEQEG.

It belongs to the universal ribosomal protein uL1 family. As to quaternary structure, part of the 50S ribosomal subunit.

Binds directly to 23S rRNA. The L1 stalk is quite mobile in the ribosome, and is involved in E site tRNA release. Functionally, protein L1 is also a translational repressor protein, it controls the translation of the L11 operon by binding to its mRNA. The chain is Large ribosomal subunit protein uL1 from Synechococcus sp. (strain CC9311).